A 306-amino-acid polypeptide reads, in one-letter code: Oxygen-dependent coproporphyrinogen-III oxidase (306 aa).

Residue Ser-93 coordinates substrate. 2 residues coordinate a divalent metal cation: His-97 and His-107. His-107 serves as the catalytic Proton donor. 109-111 contributes to the substrate binding site; that stretch reads NVR. A divalent metal cation-binding residues include His-146 and His-176. Positions 241–276 are important for dimerization; it reads YVEYNLVYDRGTLFGLQSGGRTESILMSLPPQVAWG. Residue 259–261 participates in substrate binding; the sequence is GGR.

It belongs to the aerobic coproporphyrinogen-III oxidase family. Homodimer. A divalent metal cation serves as cofactor.

Its subcellular location is the cytoplasm. The catalysed reaction is coproporphyrinogen III + O2 + 2 H(+) = protoporphyrinogen IX + 2 CO2 + 2 H2O. It functions in the pathway porphyrin-containing compound metabolism; protoporphyrin-IX biosynthesis; protoporphyrinogen-IX from coproporphyrinogen-III (O2 route): step 1/1. Its function is as follows. Involved in the heme biosynthesis. Catalyzes the aerobic oxidative decarboxylation of propionate groups of rings A and B of coproporphyrinogen-III to yield the vinyl groups in protoporphyrinogen-IX. The protein is Oxygen-dependent coproporphyrinogen-III oxidase of Stutzerimonas stutzeri (strain A1501) (Pseudomonas stutzeri).